The primary structure comprises 279 residues: Tryptophan synthase alpha chain (279 aa).

Active-site proton acceptor residues include glutamate 50 and aspartate 61.

The protein belongs to the TrpA family. Tetramer of two alpha and two beta chains.

The enzyme catalyses (1S,2R)-1-C-(indol-3-yl)glycerol 3-phosphate + L-serine = D-glyceraldehyde 3-phosphate + L-tryptophan + H2O. The protein operates within amino-acid biosynthesis; L-tryptophan biosynthesis; L-tryptophan from chorismate: step 5/5. In terms of biological role, the alpha subunit is responsible for the aldol cleavage of indoleglycerol phosphate to indole and glyceraldehyde 3-phosphate. In Brucella melitensis biotype 2 (strain ATCC 23457), this protein is Tryptophan synthase alpha chain.